The sequence spans 367 residues: Polygalacturonase (367 aa).

The N-terminal stretch at 1–18 is a signal peptide; that stretch reads MRTSFVTMLALGAAAVSA. An intrachain disulfide couples cysteine 34 to cysteine 49. 5 PbH1 repeats span residues 161–191, 192–213, 214–234, 243–264, and 272–294; these read ADRLTLDHITIDNSEGDAKGGHNTDAFDVGS, STFITISNANIKNQDDCLAINS, GSNIKFVGGTCSGGHGISIGS, VKDVTISDSTVINSDNGVRVKT, and VSGVTFSNIKLSNIAKYGIVIEQ. Aspartate 206 (proton donor) is an active-site residue. A disulfide bridge connects residues cysteine 208 and cysteine 224. The active site involves histidine 228. Residues asparagine 318 and asparagine 336 are each glycosylated (N-linked (GlcNAc...) asparagine). Intrachain disulfides connect cysteine 334–cysteine 339 and cysteine 358–cysteine 367.

Belongs to the glycosyl hydrolase 28 family.

It localises to the secreted. The catalysed reaction is (1,4-alpha-D-galacturonosyl)n+m + H2O = (1,4-alpha-D-galacturonosyl)n + (1,4-alpha-D-galacturonosyl)m.. This is Polygalacturonase (PG1) from Penicillium digitatum (Green mold).